The primary structure comprises 319 residues: Lipoyl synthase (319 aa).

The tract at residues 1–24 (MAVVIDTVGARPRHPEKQANPDTP) is disordered. The span at 13-24 (RHPEKQANPDTP) shows a compositional bias: basic and acidic residues. Residues Cys-58, Cys-63, Cys-69, Cys-84, Cys-88, Cys-91, and Ser-298 each coordinate [4Fe-4S] cluster. Residues 70 to 287 (WDKSHATFMI…EEIARAKGFL (218 aa)) enclose the Radical SAM core domain.

It belongs to the radical SAM superfamily. Lipoyl synthase family. It depends on [4Fe-4S] cluster as a cofactor.

Its subcellular location is the cytoplasm. It catalyses the reaction [[Fe-S] cluster scaffold protein carrying a second [4Fe-4S](2+) cluster] + N(6)-octanoyl-L-lysyl-[protein] + 2 oxidized [2Fe-2S]-[ferredoxin] + 2 S-adenosyl-L-methionine + 4 H(+) = [[Fe-S] cluster scaffold protein] + N(6)-[(R)-dihydrolipoyl]-L-lysyl-[protein] + 4 Fe(3+) + 2 hydrogen sulfide + 2 5'-deoxyadenosine + 2 L-methionine + 2 reduced [2Fe-2S]-[ferredoxin]. The protein operates within protein modification; protein lipoylation via endogenous pathway; protein N(6)-(lipoyl)lysine from octanoyl-[acyl-carrier-protein]: step 2/2. Catalyzes the radical-mediated insertion of two sulfur atoms into the C-6 and C-8 positions of the octanoyl moiety bound to the lipoyl domains of lipoate-dependent enzymes, thereby converting the octanoylated domains into lipoylated derivatives. The polypeptide is Lipoyl synthase (Phenylobacterium zucineum (strain HLK1)).